Here is a 727-residue protein sequence, read N- to C-terminus: Procollagen-lysine,2-oxoglutarate 5-dioxygenase 1 (727 aa).

The N-terminal stretch at Met1–Ala18 is a signal peptide. N-linked (GlcNAc...) asparagine glycosylation is found at Asn163, Asn197, and Asn538. Residues Gln636–Pro727 enclose the Fe2OG dioxygenase domain. Positions 656 and 658 each coordinate Fe cation. A glycan (N-linked (GlcNAc...) asparagine) is linked at Asn686. His708 is a binding site for Fe cation. Arg718 is an active-site residue.

As to quaternary structure, homodimer. Identified in a complex with P3H3 and P3H4. The cofactor is Fe(2+). L-ascorbate is required as a cofactor.

The protein resides in the rough endoplasmic reticulum membrane. The catalysed reaction is L-lysyl-[collagen] + 2-oxoglutarate + O2 = (5R)-5-hydroxy-L-lysyl-[collagen] + succinate + CO2. In terms of biological role, part of a complex composed of PLOD1, P3H3 and P3H4 that catalyzes hydroxylation of lysine residues in collagen alpha chains and is required for normal assembly and cross-linkling of collagen fibrils. Forms hydroxylysine residues in -Xaa-Lys-Gly- sequences in collagens. These hydroxylysines serve as sites of attachment for carbohydrate units and are essential for the stability of the intermolecular collagen cross-links. This is Procollagen-lysine,2-oxoglutarate 5-dioxygenase 1 (PLOD1) from Pongo abelii (Sumatran orangutan).